Here is an 87-residue protein sequence, read N- to C-terminus: MTILSAITSISRPNKSSKSVISSNGGSSLSMGSNSVSCFNACGGGSSYSYSSSYSGSGLDYSYKANYSSSTGYNSSVIIASSTCHCS.

Over residues 1–13 (MTILSAITSISRP) the composition is skewed to polar residues. The interval 1-31 (MTILSAITSISRPNKSSKSVISSNGGSSLSM) is disordered. A compositionally biased stretch (low complexity) spans 14–31 (NKSSKSVISSNGGSSLSM).

It belongs to the hssA/B family.

This Dictyostelium discoideum (Social amoeba) protein is HssA/B-like protein 58 (hssl58).